The chain runs to 868 residues: Alanine--tRNA ligase (868 aa).

Zn(2+)-binding residues include His553, His557, Cys657, and His661. The tract at residues 831–851 (GGKGGGRADMAQAGGSRPQAL) is disordered.

It belongs to the class-II aminoacyl-tRNA synthetase family. Zn(2+) is required as a cofactor.

The protein localises to the cytoplasm. The enzyme catalyses tRNA(Ala) + L-alanine + ATP = L-alanyl-tRNA(Ala) + AMP + diphosphate. Its function is as follows. Catalyzes the attachment of alanine to tRNA(Ala) in a two-step reaction: alanine is first activated by ATP to form Ala-AMP and then transferred to the acceptor end of tRNA(Ala). Also edits incorrectly charged Ser-tRNA(Ala) and Gly-tRNA(Ala) via its editing domain. The polypeptide is Alanine--tRNA ligase (Chromohalobacter salexigens (strain ATCC BAA-138 / DSM 3043 / CIP 106854 / NCIMB 13768 / 1H11)).